The primary structure comprises 98 residues: NADH-ubiquinone oxidoreductase chain 4L (98 aa).

3 consecutive transmembrane segments (helical) span residues 1 to 21 (MPLI…GMLV), 29 to 49 (SLLC…LMTL), and 58 to 78 (IVPI…LALL).

Belongs to the complex I subunit 4L family. As to quaternary structure, core subunit of respiratory chain NADH dehydrogenase (Complex I) which is composed of 45 different subunits.

The protein localises to the mitochondrion inner membrane. The catalysed reaction is a ubiquinone + NADH + 5 H(+)(in) = a ubiquinol + NAD(+) + 4 H(+)(out). In terms of biological role, core subunit of the mitochondrial membrane respiratory chain NADH dehydrogenase (Complex I) which catalyzes electron transfer from NADH through the respiratory chain, using ubiquinone as an electron acceptor. Part of the enzyme membrane arm which is embedded in the lipid bilayer and involved in proton translocation. The chain is NADH-ubiquinone oxidoreductase chain 4L (MT-ND4L) from Pan paniscus (Pygmy chimpanzee).